The sequence spans 178 residues: Interleukin-10 (178 aa).

The signal sequence occupies residues 1–18 (MPGSALLCCLALLAGVKA). 2 disulfides stabilise this stretch: C30-C126 and C80-C132. N-linked (GlcNAc...) asparagine glycosylation is present at N67. N134 carries an N-linked (GlcNAc...) asparagine glycan.

This sequence belongs to the IL-10 family. Homodimer. Interacts with IL10RA and IL10RB.

Its subcellular location is the secreted. Its function is as follows. Major immune regulatory cytokine that acts on many cells of the immune system where it has profound anti-inflammatory functions, limiting excessive tissue disruption caused by inflammation. Mechanistically, IL10 binds to its heterotetrameric receptor comprising IL10RA and IL10RB leading to JAK1 and STAT2-mediated phosphorylation of STAT3. In turn, STAT3 translocates to the nucleus where it drives expression of anti-inflammatory mediators. Targets antigen-presenting cells (APCs) such as macrophages and monocytes and inhibits their release of pro-inflammatory cytokines including granulocyte-macrophage colony-stimulating factor /GM-CSF, granulocyte colony-stimulating factor/G-CSF, IL-1 alpha, IL-1 beta, IL-6, IL-8 and TNF-alpha. Also interferes with antigen presentation by reducing the expression of MHC-class II and co-stimulatory molecules, thereby inhibiting their ability to induce T cell activation. In addition, controls the inflammatory response of macrophages by reprogramming essential metabolic pathways including mTOR signaling. In Cavia porcellus (Guinea pig), this protein is Interleukin-10 (IL10).